The chain runs to 185 residues: Large ribosomal subunit protein uL5 (185 aa).

This sequence belongs to the universal ribosomal protein uL5 family. As to quaternary structure, part of the 50S ribosomal subunit; part of the 5S rRNA/L5/L18/L25 subcomplex. Contacts the 5S rRNA and the P site tRNA. Forms a bridge to the 30S subunit in the 70S ribosome.

Functionally, this is one of the proteins that bind and probably mediate the attachment of the 5S RNA into the large ribosomal subunit, where it forms part of the central protuberance. In the 70S ribosome it contacts protein S13 of the 30S subunit (bridge B1b), connecting the 2 subunits; this bridge is implicated in subunit movement. Contacts the P site tRNA; the 5S rRNA and some of its associated proteins might help stabilize positioning of ribosome-bound tRNAs. This is Large ribosomal subunit protein uL5 from Streptomyces avermitilis (strain ATCC 31267 / DSM 46492 / JCM 5070 / NBRC 14893 / NCIMB 12804 / NRRL 8165 / MA-4680).